The chain runs to 953 residues: GATA zinc finger domain-containing protein 14 (953 aa).

The span at 1-21 shows a compositional bias: polar residues; sequence MFEKIPNQNSHSMGDNNTGYY. 2 disordered regions span residues 1-109 and 216-756; these read MFEK…SPNR and TYGS…TQPQ. The segment covering 22–89 has biased composition (low complexity); the sequence is NNNNNNNNNN…QLPSPQLSQP (68 aa). The segment covering 90–109 has biased composition (polar residues); sequence NSMNTTPNQTSPNLRSSPNR. 3 stretches are compositionally biased toward low complexity: residues 219-330, 342-683, and 690-756; these read SSNT…VNAN, NIYN…PNSS, and GNNG…TQPQ. A GATA-type zinc finger spans residues 893-918; the sequence is CTSCGTTQTPEWRKGPAGGKSLCNAC. Residues 934-953 form a disordered region; the sequence is KVETTSSPPSTSMNVVNLLN.

This Dictyostelium discoideum (Social amoeba) protein is GATA zinc finger domain-containing protein 14 (gtaN).